Reading from the N-terminus, the 222-residue chain is Large ribosomal subunit protein uL4 (222 aa).

The protein belongs to the universal ribosomal protein uL4 family. In terms of assembly, part of the 50S ribosomal subunit.

In terms of biological role, one of the primary rRNA binding proteins, this protein initially binds near the 5'-end of the 23S rRNA. It is important during the early stages of 50S assembly. It makes multiple contacts with different domains of the 23S rRNA in the assembled 50S subunit and ribosome. Forms part of the polypeptide exit tunnel. The chain is Large ribosomal subunit protein uL4 from Methylacidiphilum infernorum (isolate V4) (Methylokorus infernorum (strain V4)).